The chain runs to 215 residues: Protein-L-isoaspartate O-methyltransferase (215 aa).

S62 is a catalytic residue.

Belongs to the methyltransferase superfamily. L-isoaspartyl/D-aspartyl protein methyltransferase family.

The protein localises to the cytoplasm. The enzyme catalyses [protein]-L-isoaspartate + S-adenosyl-L-methionine = [protein]-L-isoaspartate alpha-methyl ester + S-adenosyl-L-homocysteine. In terms of biological role, catalyzes the methyl esterification of L-isoaspartyl residues in peptides and proteins that result from spontaneous decomposition of normal L-aspartyl and L-asparaginyl residues. It plays a role in the repair and/or degradation of damaged proteins. This chain is Protein-L-isoaspartate O-methyltransferase, found in Ruegeria sp. (strain TM1040) (Silicibacter sp.).